The chain runs to 77 residues: Acyl carrier protein (77 aa).

In terms of domain architecture, Carrier spans 2 to 77 (SNIEERVRNI…SAIDYVVNNG (76 aa)). Ser37 carries the O-(pantetheine 4'-phosphoryl)serine modification.

It belongs to the acyl carrier protein (ACP) family. In terms of processing, 4'-phosphopantetheine is transferred from CoA to a specific serine of apo-ACP by AcpS. This modification is essential for activity because fatty acids are bound in thioester linkage to the sulfhydryl of the prosthetic group.

The protein localises to the cytoplasm. The protein operates within lipid metabolism; fatty acid biosynthesis. In terms of biological role, carrier of the growing fatty acid chain in fatty acid biosynthesis. This Psychromonas ingrahamii (strain DSM 17664 / CCUG 51855 / 37) protein is Acyl carrier protein.